The primary structure comprises 310 residues: Isoflavone reductase homolog A622 (310 aa).

NADP(+) is bound by residues 13–19 (GGTGYIG), Arg-38, and Lys-47. Lys-135 serves as the catalytic Proton acceptor. Arg-139 provides a ligand contact to NADP(+).

It belongs to the NmrA-type oxidoreductase family. Isoflavone reductase subfamily. In terms of assembly, monomer. As to expression, expressed in roots and stems.

It localises to the cytoplasm. It functions in the pathway alkaloid biosynthesis; nicotine biosynthesis. Functionally, NADPH-binding protein. Involved in the biosynthesis of pyridine alkaloid natural products, leading mainly to the production of anabasine, anatabine, nicotine and nornicotine, effective deterrents against herbivores with antiparasitic and pesticide properties (neurotoxins); nornicotine serves as the precursor in the synthesis of the carcinogen compound N'-nitrosonornicotine (NNN). Reductase involved in a late step of tobacco alkaloid biosynthesis. Triggers either the formation of a nicotinic acid-derived precursor or the final condensation reaction of tobacco alkaloids. The chain is Isoflavone reductase homolog A622 from Nicotiana sylvestris (Wood tobacco).